Reading from the N-terminus, the 260-residue chain is Thiamine thiazole synthase (260 aa).

Residues Ala36, 55–56 (EQ), Gly63, and 154–156 (HVD) each bind NAD(+). The Fe cation site is built by Asp156 and His171. Met224 is an NAD(+) binding site. Arg234 lines the glycine pocket.

It belongs to the THI4 family. In terms of assembly, homooctamer; tetramer of dimers. Fe(2+) serves as cofactor.

The catalysed reaction is hydrogen sulfide + glycine + NAD(+) = ADP-5-ethyl-4-methylthiazole-2-carboxylate + nicotinamide + 3 H2O + H(+). It participates in cofactor biosynthesis; thiamine diphosphate biosynthesis. Its function is as follows. Involved in the biosynthesis of the thiazole moiety of thiamine. Catalyzes the conversion of NAD and glycine to adenosine diphosphate 5-(2-hydroxyethyl)-4-methylthiazole-2-carboxylate (ADT), an adenylated thiazole intermediate, using free sulfide as a source of sulfur. The polypeptide is Thiamine thiazole synthase (Methanosarcina acetivorans (strain ATCC 35395 / DSM 2834 / JCM 12185 / C2A)).